The chain runs to 436 residues: Septin-7 (436 aa).

At Ser2 the chain carries N-acetylserine. Phosphotyrosine is present on Tyr29. Residues 46 to 315 enclose the Septin-type G domain; that stretch reads RGFEFTLMVV…ENYRSRKLAA (270 aa). Residues 46–316 are interaction with SEPTIN12; that stretch reads RGFEFTLMVV…NYRSRKLAAV (271 aa). Residues 56 to 63 are G1 motif; it reads GESGLGKS. 56–63 contributes to the GTP binding site; the sequence is GESGLGKS. Phosphoserine is present on Ser76. GTP-binding positions include Thr89, Gly115, and 194–202; that span reads KADTLTPEE. The tract at residues 112–115 is G3 motif; the sequence is DTPG. Positions 193-196 are G4 motif; the sequence is AKAD. Thr227 is modified (phosphothreonine). GTP contacts are provided by Gly249 and Arg264. Positions 331 to 436 form a coiled coil; sequence TKSPLAQMEE…EKNKKKGKIF (106 aa). Position 333 is a phosphoserine (Ser333). The residue at position 372 (Lys372) is an N6-acetyllysine. The segment covering 377-409 has biased composition (basic and acidic residues); the sequence is ELQRRHEQMKKNLEAQHKELEEKRRQFEEEKAN. The interval 377-436 is disordered; the sequence is ELQRRHEQMKKNLEAQHKELEEKRRQFEEEKANWEAQQRILEQQNSSRTLEKNKKKGKIF. Phosphoserine is present on Ser423. The residue at position 425 (Thr425) is a Phosphothreonine.

It belongs to the TRAFAC class TrmE-Era-EngA-EngB-Septin-like GTPase superfamily. Septin GTPase family. In terms of assembly, septins polymerize into heterooligomeric protein complexes that form filaments, and associate with cellular membranes, actin filaments and microtubules. GTPase activity is required for filament formation. Filaments are assembled from asymmetrical heterotrimers, composed of SEPTIN2, SEPTIN6 and SEPTIN7 that associate head-to-head to form a hexameric unit. Within the trimer, directly interacts with SEPTIN6, while interaction with SEPTIN2 seems indirect. In the absence of SEPTIN6, forms homodimers. Interacts directly with CENPE and links CENPE to septin filaments composed of SEPTIN2, SEPTIN6 and SEPTIN7. Interacts with SEPTIN8, SEPTIN9 and SEPTIN11. Component of a septin core octameric complex consisting of SEPTIN12, SEPTIN7, SEPTIN6 and SEPTIN2 or SEPTIN4 in the order 12-7-6-2-2-6-7-12 or 12-7-6-4-4-6-7-12 and located in the sperm annulus; the SEPTIN12:SEPTIN7 association is mediated by the respective GTP-binding domains. Interacts with SEPTIN2 and SEPTIN5. Expressed in the cerebral cortex (at protein level).

It localises to the cytoplasm. It is found in the chromosome. The protein resides in the centromere. The protein localises to the kinetochore. Its subcellular location is the cytoskeleton. It localises to the spindle. It is found in the cleavage furrow. The protein resides in the midbody. The protein localises to the cilium axoneme. Its subcellular location is the cell projection. It localises to the cilium. It is found in the flagellum. Filament-forming cytoskeletal GTPase. Required for normal organization of the actin cytoskeleton. Required for normal progress through mitosis. Involved in cytokinesis. Required for normal association of CENPE with the kinetochore. Plays a role in ciliogenesis and collective cell movements. Forms a filamentous structure with SEPTIN12, SEPTIN6, SEPTIN2 and probably SEPTIN4 at the sperm annulus which is required for the structural integrity and motility of the sperm tail during postmeiotic differentiation. The polypeptide is Septin-7 (Mus musculus (Mouse)).